Here is a 320-residue protein sequence, read N- to C-terminus: Apolipoprotein E (320 aa).

The signal sequence occupies residues 1 to 18 (MKVLWAALLVAFLAGCQG). A run of 8 repeats spans residues 82–103 (ALMD…EQLS), 104–125 (PVAE…ARLG), 126–147 (ADME…AMLG), 148–169 (QSTE…KRLL), 170–191 (RDVD…EGAE), 192–213 (RGVS…ARAA), 214–236 (TVGS…ERLR), and 237–258 (ARME…EQVE). Positions 82 to 258 (ALMDETMKEL…RLDEVKEQVE (177 aa)) are 8 X 22 AA approximate tandem repeats. At Met145 the chain carries Methionine sulfoxide. Residue Ser149 is modified to Phosphoserine. An LDL and other lipoprotein receptors binding region spans residues 160-170 (HLRKLRKRLLR). Position 164–167 (164–167 (LRKR)) interacts with heparin. The lipid-binding and lipoprotein association stretch occupies residues 212–293 (AATVGSSLAG…SWFEPLVEDM (82 aa)). A heparin-binding site is contributed by 232–239 (GERLRARM). The homooligomerization stretch occupies residues 269 to 320 (QQMRLQAEAFQARLKSWFEPLVEDMQRQWAGLVEKVQAAVGASAAPVPSDNH). The tract at residues 281–293 (RLKSWFEPLVEDM) is specificity for association with VLDL.

Belongs to the apolipoprotein A1/A4/E family. Homotetramer. May interact with ABCA1; functionally associated with ABCA1 in the biogenesis of HDLs. May interact with APP/A4 amyloid-beta peptide; the interaction is extremely stable in vitro but its physiological significance is unclear. May interact with MAPT. May interact with MAP2. In the cerebrospinal fluid, interacts with secreted SORL1. Interacts with PMEL; this allows the loading of PMEL luminal fragment on ILVs to induce fibril nucleation. In terms of processing, APOE exists as multiple glycosylated and sialylated glycoforms within cells and in plasma. The extent of glycosylation and sialylation are tissue and context specific. Glycated in plasma VLDL. Post-translationally, phosphorylated by FAM20C in the extracellular medium.

The protein resides in the secreted. The protein localises to the extracellular space. It localises to the extracellular matrix. Its subcellular location is the extracellular vesicle. It is found in the endosome. The protein resides in the multivesicular body. Functionally, APOE is an apolipoprotein, a protein associating with lipid particles, that mainly functions in lipoprotein-mediated lipid transport between organs via the plasma and interstitial fluids. APOE is a core component of plasma lipoproteins and is involved in their production, conversion and clearance. Apolipoproteins are amphipathic molecules that interact both with lipids of the lipoprotein particle core and the aqueous environment of the plasma. As such, APOE associates with chylomicrons, chylomicron remnants, very low density lipoproteins (VLDL) and intermediate density lipoproteins (IDL) but shows a preferential binding to high-density lipoproteins (HDL). It also binds a wide range of cellular receptors including the LDL receptor/LDLR, the LDL receptor-related proteins LRP1, LRP2 and LRP8 and the very low-density lipoprotein receptor/VLDLR that mediate the cellular uptake of the APOE-containing lipoprotein particles. Finally, APOE also has a heparin-binding activity and binds heparan-sulfate proteoglycans on the surface of cells, a property that supports the capture and the receptor-mediated uptake of APOE-containing lipoproteins by cells. A main function of APOE is to mediate lipoprotein clearance through the uptake of chylomicrons, VLDLs, and HDLs by hepatocytes. APOE is also involved in the biosynthesis by the liver of VLDLs as well as their uptake by peripheral tissues ensuring the delivery of triglycerides and energy storage in muscle, heart and adipose tissues. By participating in the lipoprotein-mediated distribution of lipids among tissues, APOE plays a critical role in plasma and tissues lipid homeostasis. APOE is also involved in two steps of reverse cholesterol transport, the HDLs-mediated transport of cholesterol from peripheral tissues to the liver, and thereby plays an important role in cholesterol homeostasis. First, it is functionally associated with ABCA1 in the biogenesis of HDLs in tissues. Second, it is enriched in circulating HDLs and mediates their uptake by hepatocytes. APOE also plays an important role in lipid transport in the central nervous system, regulating neuron survival and sprouting. This Plecturocebus moloch (Dusky titi monkey) protein is Apolipoprotein E (APOE).